The primary structure comprises 56 residues: Large ribosomal subunit protein bL32 (56 aa).

The segment covering 1–20 (MAVPKRRTSRSNTRSRRSQW) has biased composition (basic residues). The tract at residues 1-24 (MAVPKRRTSRSNTRSRRSQWKAKV) is disordered.

It belongs to the bacterial ribosomal protein bL32 family.

The sequence is that of Large ribosomal subunit protein bL32 from Frankia casuarinae (strain DSM 45818 / CECT 9043 / HFP020203 / CcI3).